Here is a 285-residue protein sequence, read N- to C-terminus: MTTTDRIAAAFARVSEAGRAAALIPYIAAGDPSPQATVPLMHALVRAGADLVELGVPFSDPMADGPVVQRAAERAIAQGVGLRRVLELVADFRRDDSVTPVVLMGYANPIERMGQRAFAQAAQAAGVDGVLVVDYPPEEVDEFAVMLAEAGVAPIFLLAPTSTEARIEAIGRVARGYVYYVSLKGVTGAGSLDTDDVARKLALIRRHVHIPVGVGFGIRDAASAQRIAAHADAVVIGSKLIETMEQAGAQAGADQKNEAAIAAAQQWLHTIRLALDDVKRENAPA.

Catalysis depends on proton acceptor residues Glu53 and Asp64.

Belongs to the TrpA family. In terms of assembly, tetramer of two alpha and two beta chains.

The catalysed reaction is (1S,2R)-1-C-(indol-3-yl)glycerol 3-phosphate + L-serine = D-glyceraldehyde 3-phosphate + L-tryptophan + H2O. Its pathway is amino-acid biosynthesis; L-tryptophan biosynthesis; L-tryptophan from chorismate: step 5/5. Its function is as follows. The alpha subunit is responsible for the aldol cleavage of indoleglycerol phosphate to indole and glyceraldehyde 3-phosphate. The protein is Tryptophan synthase alpha chain of Bordetella pertussis (strain Tohama I / ATCC BAA-589 / NCTC 13251).